A 248-amino-acid chain; its full sequence is 3-deoxy-manno-octulosonate cytidylyltransferase 2 (248 aa).

This sequence belongs to the KdsB family.

The protein resides in the cytoplasm. The enzyme catalyses 3-deoxy-alpha-D-manno-oct-2-ulosonate + CTP = CMP-3-deoxy-beta-D-manno-octulosonate + diphosphate. It participates in nucleotide-sugar biosynthesis; CMP-3-deoxy-D-manno-octulosonate biosynthesis; CMP-3-deoxy-D-manno-octulosonate from 3-deoxy-D-manno-octulosonate and CTP: step 1/1. It functions in the pathway bacterial outer membrane biogenesis; lipopolysaccharide biosynthesis. Its function is as follows. Activates KDO (a required 8-carbon sugar) for incorporation into bacterial lipopolysaccharide in Gram-negative bacteria. In Hydrogenovibrio crunogenus (strain DSM 25203 / XCL-2) (Thiomicrospira crunogena), this protein is 3-deoxy-manno-octulosonate cytidylyltransferase 2.